The following is a 243-amino-acid chain: Isoprenyl transferase 2 (243 aa).

D23 is a catalytic residue. D23 is a Mg(2+) binding site. Substrate contacts are provided by residues G24–R27, W28, R36, H40, and S68–E70. The active-site Proton acceptor is N71. Substrate-binding positions include W72, R74, R191, and R197–S199. E210 is a binding site for Mg(2+).

Belongs to the UPP synthase family. Homodimer. Mg(2+) serves as cofactor.

Functionally, catalyzes the condensation of isopentenyl diphosphate (IPP) with allylic pyrophosphates generating different type of terpenoids. In Corynebacterium efficiens (strain DSM 44549 / YS-314 / AJ 12310 / JCM 11189 / NBRC 100395), this protein is Isoprenyl transferase 2.